A 41-amino-acid polypeptide reads, in one-letter code: Large ribosomal subunit protein bL36A (41 aa).

Belongs to the bacterial ribosomal protein bL36 family.

This is Large ribosomal subunit protein bL36A from Vibrio cholerae serotype O1 (strain ATCC 39541 / Classical Ogawa 395 / O395).